A 421-amino-acid polypeptide reads, in one-letter code: Inhibitor of growth protein 3 (421 aa).

Residues 129–163 (PSQPVNNHHAHSHTPVEKRKYNPTSHHAAADHIPE) form a disordered region. Glycyl lysine isopeptide (Lys-Gly) (interchain with G-Cter in SUMO2) cross-links involve residues Lys-148, Lys-165, and Lys-167. Position 181 is an N6-acetyllysine (Lys-181). Lys-256 is covalently cross-linked (Glycyl lysine isopeptide (Lys-Gly) (interchain with G-Cter in SUMO2)). N6-acetyllysine is present on Lys-264. Polar residues predominate over residues 286–296 (TQNASSSATDS). The tract at residues 286 to 323 (TQNASSSATDSRSGRKSKNNTKSSSQQSSSSSSSSSSS) is disordered. Over residues 308-323 (SSSQQSSSSSSSSSSS) the composition is skewed to low complexity. The PHD-type zinc finger occupies 363–412 (PRYCICNQVSYGEMVGCDNQDCPIEWFHYGCVGLTEAPKGKWFCPQCTAA). Residues Cys-366, Cys-368, Cys-379, Cys-384, His-390, Cys-393, Cys-406, and Cys-409 each coordinate Zn(2+).

The protein belongs to the ING family. Interacts with H3K4me3 and to a lesser extent with H3K4me2. Component of the NuA4 histone acetyltransferase complex which contains the catalytic subunit KAT5/TIP60 and the subunits EP400, TRRAP/PAF400, BRD8/SMAP, EPC1, DMAP1/DNMAP1, RUVBL1/TIP49, RUVBL2, ING3, actin, ACTL6A/BAF53A, MORF4L1/MRG15, MORF4L2/MRGX, MRGBP, YEATS4/GAS41, VPS72/YL1 and MEAF6. The NuA4 complex interacts with MYC. HTATTIP/TIP60, EPC1, and ING3 together constitute a minimal HAT complex termed Piccolo NuA4. Component of a SWR1-like complex.

The protein resides in the nucleus. Functionally, component of the NuA4 histone acetyltransferase (HAT) complex which is involved in transcriptional activation of select genes principally by acetylation of nucleosomal histones H4 and H2A. This modification may both alter nucleosome - DNA interactions and promote interaction of the modified histones with other proteins which positively regulate transcription. This complex may be required for the activation of transcriptional programs associated with oncogene and proto-oncogene mediated growth induction, tumor suppressor mediated growth arrest and replicative senescence, apoptosis, and DNA repair. NuA4 may also play a direct role in DNA repair when directly recruited to sites of DNA damage. Component of a SWR1-like complex that specifically mediates the removal of histone H2A.Z/H2AZ1 from the nucleosome. This Mus musculus (Mouse) protein is Inhibitor of growth protein 3 (Ing3).